A 361-amino-acid polypeptide reads, in one-letter code: Probable mannose-1-phosphate guanylyltransferase 1 (361 aa).

Leu-6 and Val-7 together coordinate GDP-alpha-D-mannose. Diphosphate contacts are provided by Gly-9, Gly-11, Thr-12, Arg-13, and Lys-23. The GDP-alpha-D-mannose site is built by Gly-85, Asn-109, Asp-111, Gly-146, and Asn-173.

It belongs to the transferase hexapeptide repeat family.

The enzyme catalyses alpha-D-mannose 1-phosphate + GTP + H(+) = GDP-alpha-D-mannose + diphosphate. The protein operates within nucleotide-sugar biosynthesis; GDP-alpha-D-mannose biosynthesis; GDP-alpha-D-mannose from alpha-D-mannose 1-phosphate (GTP route): step 1/1. In terms of biological role, catalyzes a reaction of the Smirnoff-Wheeler pathway, the major route to ascorbate biosynthesis in plants. The protein is Probable mannose-1-phosphate guanylyltransferase 1 of Oryza sativa subsp. japonica (Rice).